A 37-amino-acid polypeptide reads, in one-letter code: Cytochrome b6-f complex subunit 5 (37 aa).

A helical transmembrane segment spans residues 5–25 (LLSGIVLGLIPITLAGLFVTA).

Belongs to the PetG family. The 4 large subunits of the cytochrome b6-f complex are cytochrome b6, subunit IV (17 kDa polypeptide, PetD), cytochrome f and the Rieske protein, while the 4 small subunits are PetG, PetL, PetM and PetN. The complex functions as a dimer.

It localises to the plastid. The protein resides in the chloroplast thylakoid membrane. Its function is as follows. Component of the cytochrome b6-f complex, which mediates electron transfer between photosystem II (PSII) and photosystem I (PSI), cyclic electron flow around PSI, and state transitions. PetG is required for either the stability or assembly of the cytochrome b6-f complex. The sequence is that of Cytochrome b6-f complex subunit 5 from Cryptomeria japonica (Japanese cedar).